The primary structure comprises 102 residues: Small ribosomal subunit protein uS10 (102 aa).

This sequence belongs to the universal ribosomal protein uS10 family. Part of the 30S ribosomal subunit.

Involved in the binding of tRNA to the ribosomes. The chain is Small ribosomal subunit protein uS10 from Xanthobacter autotrophicus (strain ATCC BAA-1158 / Py2).